We begin with the raw amino-acid sequence, 578 residues long: Probable methylcrotonoyl-CoA carboxylase beta chain, mitochondrial (578 aa).

Residues 1–29 (MIRLNWLFRSSSVLLRSQVRLLHVGDANV) constitute a mitochondrion transit peptide. The CoA carboxyltransferase N-terminal domain maps to 48–305 (MASLVGDLRN…SATNSYNDQL (258 aa)). Positions 48-570 (MASLVGDLRN…KAALNNAGQE (523 aa)) are carboxyltransferase. One can recognise a CoA carboxyltransferase C-terminal domain in the interval 321–570 (AVEEPRYDAE…KAALNNAGQE (250 aa)). Residues 355–388 (DGSRFTEFKKLYGETLVCGFAKLYGHTVGIVGNN) form an acyl-CoA binding region.

Belongs to the AccD/PCCB family. As to expression, expressed in third instar larval ring gland (lateral and medial secretory cells and corpus cardiacum cells) and CNS.

The protein localises to the mitochondrion matrix. The catalysed reaction is 3-methylbut-2-enoyl-CoA + hydrogencarbonate + ATP = 3-methyl-(2E)-glutaconyl-CoA + ADP + phosphate + H(+). Its pathway is amino-acid degradation; L-leucine degradation; (S)-3-hydroxy-3-methylglutaryl-CoA from 3-isovaleryl-CoA: step 2/3. Carboxyltransferase subunit of the 3-methylcrotonyl-CoA carboxylase, an enzyme that catalyzes the conversion of 3-methylcrotonyl-CoA to 3-methylglutaconyl-CoA, a critical step for leucine and isovaleric acid catabolism. Vital for adult survival. The polypeptide is Probable methylcrotonoyl-CoA carboxylase beta chain, mitochondrial (Drosophila melanogaster (Fruit fly)).